Reading from the N-terminus, the 1454-residue chain is MAAMLGRDEDPVGALSGRVSLASTSHRSLVGASKSFRDVFMPQTDEVFGRSERREEDDMELRWAAIERLPTFDRLRKGMLPQTSANGKIELEDIDLTRLEPKDKKHLMEMILSFVEEDNEKFLRDLRERTDRVGIEVPKIEVRYENISVEGDVRSASRALPTLFNVTLNTLESILGFFHLLPSKRKKIQILKDISGIVKPSRMTLLLGPPSSGKTTLLQALAGKLDDTLQMSGRITYCGHEFREFVPQKTCAYISQHDLHFGEMTVREILDFSGRCLGVGSRYQLMSELSRREKEEGIKPDPKIDAFMKSIAISGQETSLVTDYVLKILGLDICADILAGDVMRRGISGGQKKRLTTGEMLVGPARALFMDEISTGLDSSTTFQICKFMRQLVHISDVTMIISLLQPAPETFELFDDIILLSEGQIVYQGPRDNVLEFFEYFGFQCPERKGVADFLQEVTSKKDQEQYWNKREQPYNYVSVSDFSSGFSTFHTGQKLTSEFRVPYDKAKTHSAALVTQKYGISNWELFKACFDREWLLMKRNSFVYVFKTVQITIMSLITMTVYLRTEMHVGTVRDGQKFYGAMFFSLINVMFNGLAELAFTVMRLPVFYKQRDFLFYPPWAFALPAWLLKIPLSLIESGIWIGLTYYTIGFAPSAARFFRQLLAYFCVNQMALSLFRFLGAIGRTEVISNSIGTFTLLIVFTLGGFIIAKDDIRPWMTWAYYMSPMMYGQTAIVMNEFLDERWSSPNYDTRINAKTVGEVLLKSRGFFTEPYWFWICIVALLGFSLLFNLFYILALMYLNPLGNSKATVVEEGKDKQKGENRGTEGSVVELNSSSNKGPKRGMVLPFQPLSLAFNNVNYYVDMPSEMKAQGVEGDRLQLLRDVGGAFRPGILTALVGVSGAGKTTLMDVLAGRKTGGYIEGSISISGYPKNQTTFARVSGYCEQNDIHSPHVTVYESLIYSAWLRLSTDIDIKTRELFVEEVMELVELKPLRNSIVGLPGVDGLSTEQRKRLTIAVELVANPSIIFMDEPTSGLDARAAAIVMRTVRNTVDTGRTVVCTIHQPSIDIFESFDELLLMKRGGQVIYAGSLGHHSQKLVEYFEAVEGVPKINDGYNPATWMLDVTTPSMESQMSLDFAQIFSNSSLYRRNQELIKDLSTPPPGSKDVYFKTKYAQSFSTQTKACFWKQYWSYWRHPQYNAIRFLMTVVIGVLFGLIFWQIGTKTENEQDLNNFFGAMYAAVLFLGALNAATVQPAIAIERTVFYREKAAGMYSAIPYAISQVAVEIMYNTIQTGVYTLILYSMIGCNWTMAKFLWFYYYMLTSFIYFTLYGMMLMALTPNYQIAGICMSFFLSLWNLFSGFLIPRPQIPIWWRWYYWATPVAWTLYGLITSQVGDKDSMVHISGIGDIDLKTLLKEGFGFEHDFLPVVAVVHIAWILLFLFVFAYGIKFLNFQRR.

The ABC transporter 1 domain maps to 175–448 (LGFFHLLPSK…FEYFGFQCPE (274 aa)). 208–215 (GPPSSGKT) contributes to the ATP binding site. Residues 526–739 (ELFKACFDRE…GQTAIVMNEF (214 aa)) enclose the ABC transmembrane type-2 1 domain. 7 helical membrane-spanning segments follow: residues 544–564 (FVYV…MTVY), 584–604 (MFFS…FTVM), 623–643 (FALP…GIWI), 663–683 (LLAY…LGAI), 689–709 (ISNS…GFII), 716–736 (PWMT…AIVM), and 775–795 (FWIC…FYIL). Basic and acidic residues predominate over residues 812–824 (EEGKDKQKGENRG). The interval 812 to 838 (EEGKDKQKGENRGTEGSVVELNSSSNK) is disordered. An ABC transporter 2 domain is found at 853–1106 (LAFNNVNYYV…LVEYFEAVEG (254 aa)). Position 898–905 (898–905 (GVSGAGKT)) interacts with ATP. The ABC transmembrane type-2 2 domain maps to 1178–1392 (TQTKACFWKQ…TLYGLITSQV (215 aa)). 7 helical membrane-spanning segments follow: residues 1199–1219 (AIRF…FWQI), 1231–1251 (NFFG…AATV), 1285–1303 (IMYN…YSMI), 1312–1332 (FLWF…YGMM), 1342–1362 (IAGI…GFLI), 1367–1387 (IPIW…LYGL), and 1423–1443 (FLPV…FVFA).

This sequence belongs to the ABC transporter superfamily. ABCG family. PDR (TC 3.A.1.205) subfamily.

The protein localises to the membrane. May be a general defense protein. The polypeptide is ABC transporter G family member 39 (ABCG39) (Arabidopsis thaliana (Mouse-ear cress)).